The following is a 108-amino-acid chain: VQ motif-containing protein 10 (108 aa).

The short motif at 29–38 (FKTVVQELTG) is the VQ element. Positions 65-85 (IGEDTRQLHGGGGGGGRMGTT) are disordered. Positions 73–82 (HGGGGGGGRM) are enriched in gly residues.

As to quaternary structure, interacts with WRKY25, WRKY26 and WRKY33.

Its subcellular location is the nucleus. Its function is as follows. May modulate WRKY transcription factor activities. This is VQ motif-containing protein 10 from Arabidopsis thaliana (Mouse-ear cress).